Here is a 253-residue protein sequence, read N- to C-terminus: MTAYPQFDVILKALNLSSVGVIITDPEQKDNPIIFVNTGFENITGYAKEEALGSNCHFLQGDDTDKEEVAKIRHAINEKSTANVLLKNYRKDGTSFMNELTIEPIYDDHEHLYFVGIQKDVTTEHDYQLELEKSLTEIEKLSTPIVPIKENICVLPLIGSLTHDRFQHMSEYVSEYMDHGKEDYLIMDLSGLAEFNEDAVMNLVKFHGFMKLTGVELIITGISPKFAMTLIRYEENLASLTTYSTIKEALQFY.

The PAS domain maps to 6–79 (QFDVILKALN…AKIRHAINEK (74 aa)). Cys56 carries the post-translational modification S-4a-FMN cysteine. Residues 80-133 (STANVLLKNYRKDGTSFMNELTIEPIYDDHEHLYFVGIQKDVTTEHDYQLELEK) form the PAC domain. An STAS domain is found at 142 to 253 (STPIVPIKEN…STIKEALQFY (112 aa)).

In terms of processing, FMN binds covalently to cysteine after exposure to blue light and this bond is spontaneously broken in the dark.

Its function is as follows. Exhibits the same spectroscopical features and blue-light induced photochemistry as plants phototropins, with the reversible formation of a blue-shifted photoproduct, assigned to an FMN-cysteine thiol adduct. Positive regulator in the activation of the general stress transcription factor sigma-B. The sequence is that of Blue-light photoreceptor from Listeria monocytogenes serovar 1/2a (strain ATCC BAA-679 / EGD-e).